The sequence spans 421 residues: Histidine--tRNA ligase (421 aa).

This sequence belongs to the class-II aminoacyl-tRNA synthetase family. As to quaternary structure, homodimer.

The protein localises to the cytoplasm. The enzyme catalyses tRNA(His) + L-histidine + ATP = L-histidyl-tRNA(His) + AMP + diphosphate + H(+). This Thermus thermophilus (strain ATCC BAA-163 / DSM 7039 / HB27) protein is Histidine--tRNA ligase.